A 523-amino-acid polypeptide reads, in one-letter code: Ubiquitin carboxyl-terminal hydrolase 22-A (523 aa).

The segment at 4–121 (AGCSHVNSFK…KEEQRKAWKL (118 aa)) adopts a UBP-type zinc-finger fold. Residues cysteine 6, histidine 8, cysteine 46, cysteine 49, cysteine 59, cysteine 62, cysteine 67, histidine 72, histidine 76, histidine 82, cysteine 95, and cysteine 98 each coordinate Zn(2+). The USP domain occupies 174-518 (RGLINLGNTC…EGYLLFYHKQ (345 aa)). Cysteine 183 functions as the Nucleophile in the catalytic mechanism. Histidine 477 acts as the Proton acceptor in catalysis.

Belongs to the peptidase C19 family. UBP8 subfamily. In terms of assembly, component of some SAGA transcription coactivator-HAT complexes.

The protein localises to the nucleus. It catalyses the reaction Thiol-dependent hydrolysis of ester, thioester, amide, peptide and isopeptide bonds formed by the C-terminal Gly of ubiquitin (a 76-residue protein attached to proteins as an intracellular targeting signal).. In terms of biological role, histone deubiquitinating component of the transcription regulatory histone acetylation (HAT) complex SAGA. Catalyzes the deubiquitination of both histones H2A and H2B, thereby acting as a coactivator. Recruited to specific gene promoters by activators, where it is required for transcription. The sequence is that of Ubiquitin carboxyl-terminal hydrolase 22-A (usp22-a) from Xenopus laevis (African clawed frog).